A 390-amino-acid chain; its full sequence is UDP-galactose translocator (390 aa).

The disordered stretch occupies residues 1–24 (MAAVGVGGSTAAAGAGAVSSGALE). A run of 10 helical transmembrane segments spans residues 3–23 (AVGV…SGAL), 37–57 (YISL…IRYA), 65–85 (FFAT…CLLL), 97–117 (LVLF…KLAV), 140–160 (TFQV…VLML), 169–189 (WASL…QAGG), 200–220 (GAGL…GVYF), 238–258 (LGLF…GTAV), 269–289 (PAVW…AVVV), and 315–335 (LFGF…IGAV). Over residues 9–22 (STAAAGAGAVSSGA) the composition is skewed to low complexity. Residues 356–390 (PCIHQQPPGQPPPPQLSSRGDLTTEPFLPKSVLVK) are disordered.

This sequence belongs to the nucleotide-sugar transporter family. SLC35A subfamily. As to quaternary structure, interacts with SLC35A3; the interaction is reduced in the presence of SLC35A4. Found in a complex with SLC35A3 and SLC35A4.

The protein localises to the golgi apparatus membrane. The enzyme catalyses UMP(out) + UDP-alpha-D-galactose(in) = UMP(in) + UDP-alpha-D-galactose(out). It carries out the reaction UDP-N-acetyl-alpha-D-galactosamine(in) + UMP(out) = UDP-N-acetyl-alpha-D-galactosamine(out) + UMP(in). The catalysed reaction is UMP(out) + UDP-alpha-D-glucose(in) = UMP(in) + UDP-alpha-D-glucose(out). It catalyses the reaction UMP(out) + UDP-N-acetyl-alpha-D-glucosamine(in) = UMP(in) + UDP-N-acetyl-alpha-D-glucosamine(out). The enzyme catalyses UDP-alpha-D-galactose(in) + AMP(out) = UDP-alpha-D-galactose(out) + AMP(in). It carries out the reaction UDP-alpha-D-galactose(in) + CMP(out) = UDP-alpha-D-galactose(out) + CMP(in). The catalysed reaction is UDP-N-acetyl-alpha-D-galactosamine(out) + UDP-alpha-D-galactose(in) = UDP-N-acetyl-alpha-D-galactosamine(in) + UDP-alpha-D-galactose(out). It catalyses the reaction UDP-N-acetyl-alpha-D-glucosamine(out) + UDP-alpha-D-galactose(in) = UDP-N-acetyl-alpha-D-glucosamine(in) + UDP-alpha-D-galactose(out). The enzyme catalyses UDP-alpha-D-galactose(in) + UDP-alpha-D-glucose(out) = UDP-alpha-D-galactose(out) + UDP-alpha-D-glucose(in). It carries out the reaction UMP(out) + CMP(in) = UMP(in) + CMP(out). The catalysed reaction is UMP(out) + AMP(in) = UMP(in) + AMP(out). In terms of biological role, transports uridine diphosphate galactose (UDP-galactose) from the cytosol into the Golgi apparatus. It functions as an antiporter that exchanges UDP-galactose for UMP. It is also able to exchange UDP-galactose for AMP and CMP, and to transport UDP-N-acetylgalactosamine (UDP-GalNAc) and other nucleotide sugars. As a provider of UDP-galactose to galactosyltransferases present in the Golgi apparatus, it is necessary for globotriaosylceramide/globoside (Gb3Cer) synthesis from lactosylceramide. In Mus musculus (Mouse), this protein is UDP-galactose translocator.